Here is a 285-residue protein sequence, read N- to C-terminus: Elongation factor Ts (285 aa).

The involved in Mg(2+) ion dislocation from EF-Tu stretch occupies residues Thr-82–Val-85.

The protein belongs to the EF-Ts family.

It is found in the cytoplasm. Functionally, associates with the EF-Tu.GDP complex and induces the exchange of GDP to GTP. It remains bound to the aminoacyl-tRNA.EF-Tu.GTP complex up to the GTP hydrolysis stage on the ribosome. This is Elongation factor Ts from Yersinia pseudotuberculosis serotype O:1b (strain IP 31758).